We begin with the raw amino-acid sequence, 470 residues long: 3-isopropylmalate dehydratase large subunit (470 aa).

3 residues coordinate [4Fe-4S] cluster: C351, C411, and C414.

It belongs to the aconitase/IPM isomerase family. LeuC type 1 subfamily. Heterodimer of LeuC and LeuD. It depends on [4Fe-4S] cluster as a cofactor.

The catalysed reaction is (2R,3S)-3-isopropylmalate = (2S)-2-isopropylmalate. The protein operates within amino-acid biosynthesis; L-leucine biosynthesis; L-leucine from 3-methyl-2-oxobutanoate: step 2/4. Catalyzes the isomerization between 2-isopropylmalate and 3-isopropylmalate, via the formation of 2-isopropylmaleate. This is 3-isopropylmalate dehydratase large subunit from Shewanella frigidimarina (strain NCIMB 400).